Here is a 311-residue protein sequence, read N- to C-terminus: Catechol 1,2-dioxygenase 1 (311 aa).

Fe cation is bound by residues Tyr-164, Tyr-200, His-224, and His-226.

The protein belongs to the intradiol ring-cleavage dioxygenase family. As to quaternary structure, homodimer. Fe(3+) is required as a cofactor.

It carries out the reaction catechol + O2 = cis,cis-muconate + 2 H(+). It participates in aromatic compound metabolism; beta-ketoadipate pathway; 5-oxo-4,5-dihydro-2-furylacetate from catechol: step 1/3. Can cleave 4-methyl-, 4-chloro-, and 3-methoxycatechol at lower rates than catechol, but has no activity with 4-nitrocatechol or protocatechuic acid. In Acinetobacter lwoffii, this protein is Catechol 1,2-dioxygenase 1 (catA1).